The following is a 607-amino-acid chain: Glutamine--fructose-6-phosphate aminotransferase [isomerizing] (607 aa).

C2 (nucleophile; for GATase activity) is an active-site residue. One can recognise a Glutamine amidotransferase type-2 domain in the interval 2–217 (CGIIGIIGND…DGDWAVLTRN (216 aa)). 2 consecutive SIS domains span residues 283 to 422 (IGID…ARGA) and 455 to 597 (VCHD…VDQP). The active-site For Fru-6P isomerization activity is K602.

Homodimer.

It localises to the cytoplasm. It carries out the reaction D-fructose 6-phosphate + L-glutamine = D-glucosamine 6-phosphate + L-glutamate. Catalyzes the first step in hexosamine metabolism, converting fructose-6P into glucosamine-6P using glutamine as a nitrogen source. The chain is Glutamine--fructose-6-phosphate aminotransferase [isomerizing] from Brucella abortus biovar 1 (strain 9-941).